Reading from the N-terminus, the 221-residue chain is Uracil-DNA glycosylase (221 aa).

The active-site Proton acceptor is the Asp-64.

This sequence belongs to the uracil-DNA glycosylase (UDG) superfamily. UNG family.

It localises to the cytoplasm. The catalysed reaction is Hydrolyzes single-stranded DNA or mismatched double-stranded DNA and polynucleotides, releasing free uracil.. In terms of biological role, excises uracil residues from the DNA which can arise as a result of misincorporation of dUMP residues by DNA polymerase or due to deamination of cytosine. This is Uracil-DNA glycosylase from Mycoplasmopsis pulmonis (strain UAB CTIP) (Mycoplasma pulmonis).